Here is a 479-residue protein sequence, read N- to C-terminus: mRNA export factor ICP27 homolog (479 aa).

Residues 1 to 15 are compositionally biased toward low complexity; the sequence is MVPSQRLSRTSSISS. Disordered stretches follow at residues 1–78 and 92–210; these read MVPS…SSVV and KWDL…NKPW. Residues 35 to 44 show a composition bias toward acidic residues; it reads TDCDMDPMEG. The span at 132 to 142 shows a compositional bias: basic and acidic residues; sequence EVHGCTDESYG. Zn(2+) contacts are provided by C354, H445, C449, and C454. The segment at 354–454 adopts a CHC2-type zinc-finger fold; that stretch reads CFLPNTRDYN…HTRDCRSASC (101 aa).

Belongs to the HHV-1 ICP27 protein family. As to quaternary structure, interacts with host XPO1 and with the XPO1 export pathway components small GTPase RAN and nucleoporin NUP214. Interacts with host SPEN, OTT1 and OTT3. Interacts with host SRSF1, SRSF3, SRSF7 and SRPK1. Interacts with host DHX9; this interaction may have an inhibitory effect on virion production. Interacts (via N-terminus) with host NXF1; this interaction plays a role in mRNA export. Phosphorylated by cellular protein kinase CK2.

The protein localises to the host nucleus. It localises to the host cytoplasm. Promotes the nuclear export of a subset of early and late viral mRNAs by interacting with mRNAs and cellular export proteins. Additionally may prevent the establishment of cellular antiviral state, by acting as an alternative splicing factor for cellular RNAs such as STAT1, resulting in a STAT1 mRNA incapable of producing the STAT1alpha isoform. In Homo sapiens (Human), this protein is mRNA export factor ICP27 homolog.